The primary structure comprises 416 residues: CinA-like protein (416 aa).

This sequence belongs to the CinA family.

In Trichormus variabilis (strain ATCC 29413 / PCC 7937) (Anabaena variabilis), this protein is CinA-like protein.